Here is a 425-residue protein sequence, read N- to C-terminus: 2-oxoglutarate and iron-dependent oxygenase JMJD4 homolog (425 aa).

The 152-residue stretch at 165 to 316 (AAQMPGYNFY…MVWQNLKNNL (152 aa)) folds into the JmjC domain. Residues His-212, Asp-214, and His-284 each coordinate Fe cation.

This sequence belongs to the JMJD6 family. It depends on Fe(2+) as a cofactor.

It localises to the nucleus. The protein resides in the cytoplasm. The enzyme catalyses L-lysyl-[protein] + 2-oxoglutarate + O2 = 4-hydroxy-L-lysyl-[protein] + succinate + CO2. In terms of biological role, catalyzes the 2-oxoglutarate and iron-dependent C4-lysyl hydroxylation of eRF1 thereby promoting the translational termination efficiency of eRF1. May be involved in regulation of chromatin structure, promoting expansion of heterochromatin. This Drosophila melanogaster (Fruit fly) protein is 2-oxoglutarate and iron-dependent oxygenase JMJD4 homolog.